Reading from the N-terminus, the 534-residue chain is MGLCFSSPKATRRGTGSRNPNPDSPTQGKASEKVSNKNKKNTKKIQLRHQGGIPYGKRIDFGYAKDFDNRYTIGKLLGHGQFGFTYVATDNNNGNRVAVKRIDKAKMTQPIEVEDVKREVKILQALGGHENVVGFHNAFEDKTYIYIVMELCDGGELLDRILAKKDSRYTEKDAAVVVRQMLKVAAECHLRGLVHRDMKPENFLFKSTEEGSSLKATDFGLSDFIKPGVKFQDIVGSAYYVAPEVLKRRSGPESDVWSIGVITYILLCGRRPFWDKTQDGIFNEVMRKKPDFREVPWPTISNGAKDFVKKLLVKEPRARLTAAQALSHSWVKEGGEASEVPIDISVLNNMRQFVKFSRLKQIALRALAKTINEDELDDLRDQFDAIDIDKNGSISLEEMRQALAKDVPWKLKDARVAEILQANDSNTDGLVDFTEFVVAALHVNQLEEHDSEKWQQRSRAAFDKFDIDGDGFITPEELRLQTGLKGSIEPLLEEADVDEDGRISINEFRRLLRSASLKSKNVKSPPGYQLSQKM.

Positions 1–49 are disordered; that stretch reads MGLCFSSPKATRRGTGSRNPNPDSPTQGKASEKVSNKNKKNTKKIQLRH. Gly-2 carries the N-myristoyl glycine lipid modification. Polar residues predominate over residues 14–29; it reads GTGSRNPNPDSPTQGK. Positions 36–47 are enriched in basic residues; the sequence is NKNKKNTKKIQL. The 261-residue stretch at 71-331 folds into the Protein kinase domain; the sequence is YTIGKLLGHG…AAQALSHSWV (261 aa). Residues 77–85 and Lys-100 contribute to the ATP site; that span reads LGHGQFGFT. The active-site Proton acceptor is the Asp-197. Residue Ser-237 is modified to Phosphoserine. The interval 337 to 367 is autoinhibitory domain; the sequence is ASEVPIDISVLNNMRQFVKFSRLKQIALRAL. EF-hand domains are found at residues 374-409, 411-446, 453-488, and 491-518; these read DELD…DVPW, LKDA…VNQL, KWQQ…KGSI, and LLEE…ASLK. Positions 387, 389, 391, 393, 398, 424, 426, 428, 435, 466, 468, 470, 477, 496, 498, 500, and 502 each coordinate Ca(2+). The residue at position 504 (Ser-504) is a Phosphoserine. Glu-507 is a Ca(2+) binding site.

It belongs to the protein kinase superfamily. Ser/Thr protein kinase family. CDPK subfamily.

The protein localises to the membrane. It catalyses the reaction L-seryl-[protein] + ATP = O-phospho-L-seryl-[protein] + ADP + H(+). The catalysed reaction is L-threonyl-[protein] + ATP = O-phospho-L-threonyl-[protein] + ADP + H(+). With respect to regulation, activated by calcium. Autophosphorylation may play an important role in the regulation of the kinase activity. In terms of biological role, may play a role in signal transduction pathways that involve calcium as a second messenger. This chain is Calcium-dependent protein kinase 18 (CPK18), found in Arabidopsis thaliana (Mouse-ear cress).